The sequence spans 274 residues: Acyl-[acyl-carrier-protein]--UDP-N-acetylglucosamine O-acyltransferase (274 aa).

Belongs to the transferase hexapeptide repeat family. LpxA subfamily. In terms of assembly, homotrimer.

The protein localises to the cytoplasm. It catalyses the reaction a (3R)-hydroxyacyl-[ACP] + UDP-N-acetyl-alpha-D-glucosamine = a UDP-3-O-[(3R)-3-hydroxyacyl]-N-acetyl-alpha-D-glucosamine + holo-[ACP]. It functions in the pathway glycolipid biosynthesis; lipid IV(A) biosynthesis; lipid IV(A) from (3R)-3-hydroxytetradecanoyl-[acyl-carrier-protein] and UDP-N-acetyl-alpha-D-glucosamine: step 1/6. Functionally, involved in the biosynthesis of lipid A, a phosphorylated glycolipid that anchors the lipopolysaccharide to the outer membrane of the cell. The sequence is that of Acyl-[acyl-carrier-protein]--UDP-N-acetylglucosamine O-acyltransferase from Bartonella quintana (strain Toulouse) (Rochalimaea quintana).